The primary structure comprises 504 residues: Biotinidase (504 aa).

Residues 1 to 20 (MFSFGTVFTFALLLIPLTEA) form the signal peptide. The 280-residue stretch at 30–309 (YEHNLILNPD…GRLLVARVPV (280 aa)) folds into the CN hydrolase domain. Glu79 serves as the catalytic Proton acceptor. N-linked (GlcNAc...) asparagine glycosylation is found at Asn86 and Asn117. Residue Lys181 is the Proton donor of the active site. The active-site Nucleophile is the Cys214. Asn261, Asn365, and Asn375 each carry an N-linked (GlcNAc...) asparagine glycan.

The protein belongs to the carbon-nitrogen hydrolase superfamily. BTD/VNN family.

Its subcellular location is the secreted. The protein resides in the extracellular space. The catalysed reaction is biocytin + H2O = biotin + L-lysine. The enzyme catalyses biotin amide + H2O = biotin + NH4(+). Functionally, catalytic release of biotin from biocytin, the product of biotin-dependent carboxylases degradation. The sequence is that of Biotinidase (btd) from Takifugu rubripes (Japanese pufferfish).